Consider the following 332-residue polypeptide: Probable L-asparaginase (332 aa).

The Asparaginase/glutaminase domain maps to 6–332; that stretch reads PTIALLATGG…AKIQEMFEEY (327 aa). The active-site O-isoaspartyl threonine intermediate is the Thr-16. Substrate-binding positions include Ser-62 and 95–96; that span reads TD.

It belongs to the asparaginase 1 family.

Its subcellular location is the cytoplasm. It catalyses the reaction L-asparagine + H2O = L-aspartate + NH4(+). The sequence is that of Probable L-asparaginase (ansA) from Helicobacter pylori (strain J99 / ATCC 700824) (Campylobacter pylori J99).